Here is a 76-residue protein sequence, read N- to C-terminus: MKNAVLVFLLLSVFALSVNAYGYGCGWYGCPYGSKCICPYYGKCYCVPVYGKNCYIYGCPYPKVCVYGVCKWRYKY.

A signal peptide spans 1–20 (MKNAVLVFLLLSVFALSVNA).

As to expression, prismatic layer of shell (at protein level). Expressed primarily in the mantle with equal levels in the mantle edge and the mantle pallium.

Its subcellular location is the secreted. This is an uncharacterized protein from Margaritifera margaritifera (Freshwater pearl mussel).